The following is a 124-amino-acid chain: Insulin growth factor-like family member 4 (124 aa).

Residues Met1–Ser19 form the signal peptide. N-linked (GlcNAc...) asparagine glycans are attached at residues Asn57 and Asn84.

This sequence belongs to the IGFL family. In terms of tissue distribution, detected in the cerebellum.

It localises to the secreted. The sequence is that of Insulin growth factor-like family member 4 (IGFL4) from Homo sapiens (Human).